Consider the following 102-residue polypeptide: Polymeric immunoglobulin receptor (102 aa).

In terms of assembly, interacts (mainly via CDR1-like domain) with dimeric IgA. Interacts (mainly via CDR2-like domain) with pentameric IgM. Either free or part of the secretory IgA (sIgA) complex that consists of two, four or five IgA monomers, and two additional non-Ig polypeptides, namely the JCHAIN and the secretory component (the proteolytic product of PIGR). Free secretory component interacts with bacterial antigens toxA of C.difficile and eaeA of E.coli. N-glycosylated. N-glycosylation is required for anchoring IgA molecules to mucus, but is not necessary for Ig binding.

It localises to the cell membrane. It is found in the secreted. Functionally, mediates selective transcytosis of polymeric IgA and IgM across mucosal epithelial cells. Binds polymeric IgA and IgM at the basolateral surface of epithelial cells. The complex is then transported across the cell to be secreted at the apical surface. During this process, a cleavage occurs that separates the extracellular (known as the secretory component) from the transmembrane segment. Through its N-linked glycans ensures anchoring of secretory IgA (sIgA) molecules to mucus lining the epithelial surface to neutralize extracellular pathogens. On its own (free form) may act as a non-specific microbial scavenger to prevent pathogen interaction with epithelial cells. The polypeptide is Polymeric immunoglobulin receptor (PIGR) (Sus scrofa (Pig)).